We begin with the raw amino-acid sequence, 439 residues long: Branched-chain amino acid permease BrnQ (439 aa).

The Cytoplasmic segment spans residues 1–9 (MTHQLKSRD). The chain crosses the membrane as a helical span at residues 10–30 (IIALGFMTFALFVGAGNIIFP). The Periplasmic portion of the chain corresponds to 31-43 (PMVGLQAGEHVWT). Residues 44–64 (AAIGFLITAVGLPVLTVVALA) traverse the membrane as a helical segment. Topologically, residues 65 to 79 (KVGGGVDSLSTPIGK) are cytoplasmic. The chain crosses the membrane as a helical span at residues 80–100 (VAGLLLATVCYLAVGPLFATP). The Periplasmic portion of the chain corresponds to 101–118 (RTATVSFEVGIAPLTGDS). The chain crosses the membrane as a helical span at residues 119–139 (AMPLLIYSVVYFAIVILVSLY). Over 140 to 149 (PGKLLDTVGN) the chain is Cytoplasmic. A helical transmembrane segment spans residues 150 to 170 (FLAPLKIIALVILSVAAIVWP). At 171–189 (AGPISNALDAYQNAAFSNG) the chain is on the periplasmic side. The chain crosses the membrane as a helical span at residues 190-210 (FVNGYLTMDTLGAMVFGIVIV). Residues 211 to 226 (NAARSRGVTEARLLTR) are Cytoplasmic-facing. Residues 227–247 (YTVWAGLMAGVGLTLLYLALF) traverse the membrane as a helical segment. Over 248 to 277 (RLGSDSATLVDQSANGAAILHAYVQHTFGG) the chain is Periplasmic. The chain crosses the membrane as a helical span at residues 278–298 (AGSFLLAALIFIACLVTAVGL). Over 299 to 316 (TCACAEFFAQYIPLSYRT) the chain is Cytoplasmic. A helical membrane pass occupies residues 317 to 337 (LVFILGGFSMVVSNLGLSHLI). Residue Gln-338 is a topological domain, periplasmic. Residues 339-359 (ISIPVLTAIYPPCIALVVLSF) form a helical membrane-spanning segment. The Cytoplasmic portion of the chain corresponds to 360-369 (TRSWWHNSTR). A helical transmembrane segment spans residues 370 to 390 (IIAPAMFISLLFGILDGIKAS). At 391-404 (AFGDMLPAWSQRLP) the chain is on the periplasmic side. A helical transmembrane segment spans residues 405 to 425 (LAEQGLAWLMPTVVMVILAII). Topologically, residues 426–439 (WDRAAGRQVTSSAH) are cytoplasmic.

The protein belongs to the branched chain amino acid transporter family.

It localises to the cell inner membrane. Its function is as follows. Liv-II branched chain amino acid transport system, which transports leucine, valine and isoleucine. In Salmonella typhimurium (strain LT2 / SGSC1412 / ATCC 700720), this protein is Branched-chain amino acid permease BrnQ.